Here is a 328-residue protein sequence, read N- to C-terminus: Gonadotropin-releasing hormone receptor (328 aa).

Over 1 to 38 (MANSDSPEQNENHCSSINSSIPLTPGSLPTLTLSGKIR) the chain is Extracellular. Residue asparagine 18 is glycosylated (N-linked (GlcNAc...) asparagine). Residues 39–58 (VTVTFFLFLLSTIFNTSFLL) form a helical membrane-spanning segment. Over 59–77 (KLQNWTQRKEKRKKLSRMK) the chain is Cytoplasmic. Residues 78-97 (LLLKHLTLANLLETLIVMPL) traverse the membrane as a helical segment. Residues 98 to 115 (DGMWNITVQWYAGELLCK) are Extracellular-facing. Asparagine 102 carries an N-linked (GlcNAc...) asparagine glycan. Cysteines 114 and 196 form a disulfide. The helical transmembrane segment at 116 to 137 (VLSYLKLFSMYAPAFMMVVISL) threads the bilayer. Topologically, residues 138-164 (DRSLAITKPLAVKSNSKLGQFMIGLAW) are cytoplasmic. Residues 165 to 184 (LLSSIFAGPQLYIFGMIHLA) traverse the membrane as a helical segment. At 185 to 212 (DDSGQTEGFSQCVTHCSFPQWWHQAFYN) the chain is on the extracellular side. A helical transmembrane segment spans residues 213-232 (FFTFSCLFIIPLLIMVICNA). The Cytoplasmic segment spans residues 233–281 (KIIFTLTRVLHQDPHKLQLNQSKNNIPRARLRTLKMTVAFATSFTVCWT). The helical transmembrane segment at 282–300 (PYYVLGIWYWFDPDMVNRV) threads the bilayer. Residues 301-306 (SDPVNH) are Extracellular-facing. Residues 307 to 326 (FFFLFAFLNPCFNPLIYGYF) traverse the membrane as a helical segment. Topologically, residues 327 to 328 (SL) are cytoplasmic.

This sequence belongs to the G-protein coupled receptor 1 family.

Its subcellular location is the cell membrane. Receptor for gonadotropin releasing hormone (GnRH) that mediates the action of GnRH to stimulate the secretion of the gonadotropic hormones luteinizing hormone (LH) and follicle-stimulating hormone (FSH). This receptor mediates its action by association with G-proteins that activate a phosphatidylinositol-calcium second messenger system. This is Gonadotropin-releasing hormone receptor (GNRHR) from Bos mutus grunniens (Wild yak).